Here is a 132-residue protein sequence, read N- to C-terminus: UPF0102 protein Acel_1550 (132 aa).

This sequence belongs to the UPF0102 family.

The chain is UPF0102 protein Acel_1550 from Acidothermus cellulolyticus (strain ATCC 43068 / DSM 8971 / 11B).